Reading from the N-terminus, the 184-residue chain is dITP/XTP pyrophosphatase (184 aa).

Residue 7 to 12 coordinates substrate; sequence TSNPGK. Residues Glu-36 and Asp-65 each coordinate Mg(2+). Asp-65 acts as the Proton acceptor in catalysis. Substrate-binding positions include Ser-66, 139–142, Lys-162, and 167–168; these read FGFD and HR.

Belongs to the HAM1 NTPase family. As to quaternary structure, homodimer. It depends on Mg(2+) as a cofactor.

The enzyme catalyses XTP + H2O = XMP + diphosphate + H(+). The catalysed reaction is dITP + H2O = dIMP + diphosphate + H(+). It catalyses the reaction ITP + H2O = IMP + diphosphate + H(+). Pyrophosphatase that catalyzes the hydrolysis of nucleoside triphosphates to their monophosphate derivatives, with a high preference for the non-canonical purine nucleotides XTP (xanthosine triphosphate), dITP (deoxyinosine triphosphate) and ITP. Seems to function as a house-cleaning enzyme that removes non-canonical purine nucleotides from the nucleotide pool, thus preventing their incorporation into DNA/RNA and avoiding chromosomal lesions. This Thermococcus kodakarensis (strain ATCC BAA-918 / JCM 12380 / KOD1) (Pyrococcus kodakaraensis (strain KOD1)) protein is dITP/XTP pyrophosphatase.